The primary structure comprises 276 residues: Putative phosphoenolpyruvate synthase regulatory protein (276 aa).

Residue 156 to 163 coordinates ADP; it reads GVSRSGKT.

Belongs to the pyruvate, phosphate/water dikinase regulatory protein family. PSRP subfamily.

It carries out the reaction [pyruvate, water dikinase] + ADP = [pyruvate, water dikinase]-phosphate + AMP + H(+). The catalysed reaction is [pyruvate, water dikinase]-phosphate + phosphate + H(+) = [pyruvate, water dikinase] + diphosphate. Its function is as follows. Bifunctional serine/threonine kinase and phosphorylase involved in the regulation of the phosphoenolpyruvate synthase (PEPS) by catalyzing its phosphorylation/dephosphorylation. The chain is Putative phosphoenolpyruvate synthase regulatory protein from Acidovorax ebreus (strain TPSY) (Diaphorobacter sp. (strain TPSY)).